A 63-amino-acid polypeptide reads, in one-letter code: Large ribosomal subunit protein uL29 (63 aa).

Belongs to the universal ribosomal protein uL29 family.

This is Large ribosomal subunit protein uL29 from Herminiimonas arsenicoxydans.